Consider the following 352-residue polypeptide: Biotin synthase (352 aa).

A Radical SAM core domain is found at 44–262; sequence NRVQVSTLLS…LAVARILMPK (219 aa). Residues C59, C63, and C66 each contribute to the [4Fe-4S] cluster site. C103, C134, C194, and R266 together coordinate [2Fe-2S] cluster.

It belongs to the radical SAM superfamily. Biotin synthase family. In terms of assembly, homodimer. Requires [4Fe-4S] cluster as cofactor. The cofactor is [2Fe-2S] cluster.

The catalysed reaction is (4R,5S)-dethiobiotin + (sulfur carrier)-SH + 2 reduced [2Fe-2S]-[ferredoxin] + 2 S-adenosyl-L-methionine = (sulfur carrier)-H + biotin + 2 5'-deoxyadenosine + 2 L-methionine + 2 oxidized [2Fe-2S]-[ferredoxin]. The protein operates within cofactor biosynthesis; biotin biosynthesis; biotin from 7,8-diaminononanoate: step 2/2. Its function is as follows. Catalyzes the conversion of dethiobiotin (DTB) to biotin by the insertion of a sulfur atom into dethiobiotin via a radical-based mechanism. In Pseudomonas entomophila (strain L48), this protein is Biotin synthase.